The following is a 429-amino-acid chain: Glutamate-1-semialdehyde 2,1-aminomutase 2 (429 aa).

Lys268 is modified (N6-(pyridoxal phosphate)lysine).

The protein belongs to the class-III pyridoxal-phosphate-dependent aminotransferase family. HemL subfamily. As to quaternary structure, homodimer. Pyridoxal 5'-phosphate is required as a cofactor.

Its subcellular location is the cytoplasm. It carries out the reaction (S)-4-amino-5-oxopentanoate = 5-aminolevulinate. It functions in the pathway porphyrin-containing compound metabolism; protoporphyrin-IX biosynthesis; 5-aminolevulinate from L-glutamyl-tRNA(Glu): step 2/2. In Bacillus velezensis (strain DSM 23117 / BGSC 10A6 / LMG 26770 / FZB42) (Bacillus amyloliquefaciens subsp. plantarum), this protein is Glutamate-1-semialdehyde 2,1-aminomutase 2.